The following is a 412-amino-acid chain: Elongation factor 1-gamma 2 (412 aa).

Serine 2 is subject to N-acetylserine. In terms of domain architecture, GST N-terminal spans 2–77 (SQGTLYINRS…YLANQVADEK (76 aa)). The GST C-terminal domain occupies 86–217 (DVIEKSQILR…AEKALTYTPP (132 aa)). The interval 216–253 (PPKKQKAEKPKAEKSKAEKKKDEAKPADDAAPAKKPKH) is disordered. Residues 220-247 (QKAEKPKAEKSKAEKKKDEAKPADDAAP) are compositionally biased toward basic and acidic residues. Positions 251 to 412 (PKHPLEALGK…KEIVDGKVLK (162 aa)) constitute an EF-1-gamma C-terminal domain.

As to quaternary structure, the eukaryotic elongation factor 1 complex (eEF1) is probably a heterohexamer. Two trimeric complexes, each composed of eEF1A (TEF1 or TEF2), eEF1Balpha (EFB1) and eEF1Bgamma (CAM1 or TEF4), are probably dimerized via the eF1Bgamma subunits. The eEF1B subcomplex with the GEF activity is formed of eEF1Balpha and eEF1Bgamma. TEF4 interacts with EFB1.

It localises to the cytoplasm. The protein operates within protein biosynthesis; polypeptide chain elongation. Its function is as follows. Subunit of the eukaryotic elongation factor 1 complex (eEF1). Probably plays a role in anchoring the complex to other cellular components. The chain is Elongation factor 1-gamma 2 (TEF4) from Saccharomyces cerevisiae (strain ATCC 204508 / S288c) (Baker's yeast).